The chain runs to 594 residues: Aspartate--tRNA(Asp/Asn) ligase (594 aa).

Position 175 (Glu175) interacts with L-aspartate. Positions 199–202 (QIYK) are aspartate. 2 residues coordinate L-aspartate: Arg221 and His454. 221–223 (RDE) provides a ligand contact to ATP. Glu488 provides a ligand contact to ATP. Arg495 contacts L-aspartate. An ATP-binding site is contributed by 540-543 (GIDR).

The protein belongs to the class-II aminoacyl-tRNA synthetase family. Type 1 subfamily. As to quaternary structure, homodimer.

The protein resides in the cytoplasm. The enzyme catalyses tRNA(Asx) + L-aspartate + ATP = L-aspartyl-tRNA(Asx) + AMP + diphosphate. In terms of biological role, aspartyl-tRNA synthetase with relaxed tRNA specificity since it is able to aspartylate not only its cognate tRNA(Asp) but also tRNA(Asn). Reaction proceeds in two steps: L-aspartate is first activated by ATP to form Asp-AMP and then transferred to the acceptor end of tRNA(Asp/Asn). This chain is Aspartate--tRNA(Asp/Asn) ligase, found in Chelativorans sp. (strain BNC1).